Consider the following 260-residue polypeptide: Phosphate import ATP-binding protein PstB (260 aa).

The ABC transporter domain occupies 14 to 255 (IETENLNLFY…PKNTKTEEYI (242 aa)). ATP is bound at residue 46–53 (GPSGCGKS).

The protein belongs to the ABC transporter superfamily. Phosphate importer (TC 3.A.1.7) family. In terms of assembly, the complex is composed of two ATP-binding proteins (PstB), two transmembrane proteins (PstC and PstA) and a solute-binding protein (PstS).

The protein localises to the cell inner membrane. The enzyme catalyses phosphate(out) + ATP + H2O = ADP + 2 phosphate(in) + H(+). In terms of biological role, part of the ABC transporter complex PstSACB involved in phosphate import. Responsible for energy coupling to the transport system. This Borreliella burgdorferi (strain ATCC 35210 / DSM 4680 / CIP 102532 / B31) (Borrelia burgdorferi) protein is Phosphate import ATP-binding protein PstB.